The sequence spans 351 residues: 3-dehydroquinate synthase (351 aa).

NAD(+) is bound by residues 60–65, 94–98, 118–119, lysine 131, lysine 140, and 158–161; these read DGEEYK, GVISD, TT, and FLKT. Residues glutamate 173, histidine 239, and histidine 256 each coordinate Zn(2+).

Belongs to the sugar phosphate cyclases superfamily. Dehydroquinate synthase family. It depends on Co(2+) as a cofactor. Requires Zn(2+) as cofactor. NAD(+) serves as cofactor.

The protein localises to the cytoplasm. The catalysed reaction is 7-phospho-2-dehydro-3-deoxy-D-arabino-heptonate = 3-dehydroquinate + phosphate. Its pathway is metabolic intermediate biosynthesis; chorismate biosynthesis; chorismate from D-erythrose 4-phosphate and phosphoenolpyruvate: step 2/7. Its function is as follows. Catalyzes the conversion of 3-deoxy-D-arabino-heptulosonate 7-phosphate (DAHP) to dehydroquinate (DHQ). This is 3-dehydroquinate synthase from Campylobacter jejuni subsp. doylei (strain ATCC BAA-1458 / RM4099 / 269.97).